The primary structure comprises 595 residues: Adenine deaminase 3 (595 aa).

The protein belongs to the metallo-dependent hydrolases superfamily. Adenine deaminase family. Requires Mn(2+) as cofactor.

The enzyme catalyses adenine + H2O + H(+) = hypoxanthine + NH4(+). This chain is Adenine deaminase 3, found in Rhizobium meliloti (strain 1021) (Ensifer meliloti).